The following is a 1089-amino-acid chain: Carbamoyl phosphate synthase large chain (1089 aa).

Residues Met-1–Glu-399 form a carboxyphosphate synthetic domain region. Residues Arg-127, Arg-167, Gly-173, Gly-174, Glu-206, Leu-208, Glu-213, Gly-239, Val-240, His-241, Gln-283, and Glu-297 each coordinate ATP. The 196-residue stretch at Lys-131–Val-326 folds into the ATP-grasp 1 domain. Residues Gln-283, Glu-297, and Asn-299 each contribute to the Mg(2+) site. Residues Gln-283, Glu-297, and Asn-299 each coordinate Mn(2+). Positions Arg-400–Asn-553 are oligomerization domain. The carbamoyl phosphate synthetic domain stretch occupies residues Asp-554–Phe-951. In terms of domain architecture, ATP-grasp 2 spans Ala-680–Trp-871. 10 residues coordinate ATP: Arg-716, Gln-755, Leu-757, Glu-762, Gly-787, Ile-788, His-789, Ser-790, Gln-830, and Glu-842. Residues Gln-830, Glu-842, and Asn-844 each contribute to the Mg(2+) site. The Mn(2+) site is built by Gln-830, Glu-842, and Asn-844. One can recognise an MGS-like domain in the interval Asn-952–Ser-1089. The allosteric domain stretch occupies residues Asn-952–Ser-1089.

The protein belongs to the CarB family. Composed of two chains; the small (or glutamine) chain promotes the hydrolysis of glutamine to ammonia, which is used by the large (or ammonia) chain to synthesize carbamoyl phosphate. Tetramer of heterodimers (alpha,beta)4. Mg(2+) is required as a cofactor. The cofactor is Mn(2+).

The enzyme catalyses hydrogencarbonate + L-glutamine + 2 ATP + H2O = carbamoyl phosphate + L-glutamate + 2 ADP + phosphate + 2 H(+). It catalyses the reaction hydrogencarbonate + NH4(+) + 2 ATP = carbamoyl phosphate + 2 ADP + phosphate + 2 H(+). It participates in amino-acid biosynthesis; L-arginine biosynthesis; carbamoyl phosphate from bicarbonate: step 1/1. It functions in the pathway pyrimidine metabolism; UMP biosynthesis via de novo pathway; (S)-dihydroorotate from bicarbonate: step 1/3. Functionally, large subunit of the glutamine-dependent carbamoyl phosphate synthetase (CPSase). CPSase catalyzes the formation of carbamoyl phosphate from the ammonia moiety of glutamine, carbonate, and phosphate donated by ATP, constituting the first step of 2 biosynthetic pathways, one leading to arginine and/or urea and the other to pyrimidine nucleotides. The large subunit (synthetase) binds the substrates ammonia (free or transferred from glutamine from the small subunit), hydrogencarbonate and ATP and carries out an ATP-coupled ligase reaction, activating hydrogencarbonate by forming carboxy phosphate which reacts with ammonia to form carbamoyl phosphate. This chain is Carbamoyl phosphate synthase large chain, found in Campylobacter jejuni subsp. jejuni serotype O:2 (strain ATCC 700819 / NCTC 11168).